Here is a 428-residue protein sequence, read N- to C-terminus: Glutamate-1-semialdehyde 2,1-aminomutase (428 aa).

Position 267 is an N6-(pyridoxal phosphate)lysine (Lys267).

It belongs to the class-III pyridoxal-phosphate-dependent aminotransferase family. HemL subfamily. Homodimer. Pyridoxal 5'-phosphate serves as cofactor.

Its subcellular location is the cytoplasm. The catalysed reaction is (S)-4-amino-5-oxopentanoate = 5-aminolevulinate. It functions in the pathway porphyrin-containing compound metabolism; protoporphyrin-IX biosynthesis; 5-aminolevulinate from L-glutamyl-tRNA(Glu): step 2/2. The chain is Glutamate-1-semialdehyde 2,1-aminomutase from Flavobacterium johnsoniae (strain ATCC 17061 / DSM 2064 / JCM 8514 / BCRC 14874 / CCUG 350202 / NBRC 14942 / NCIMB 11054 / UW101) (Cytophaga johnsonae).